The sequence spans 305 residues: Polyamine aminopropyltransferase 2 (305 aa).

Positions W7–D242 constitute a PABS domain. Q36 lines the S-methyl-5'-thioadenosine pocket. The spermidine site is built by H67 and E91. Residues D111 and D143–G144 contribute to the S-methyl-5'-thioadenosine site. Catalysis depends on D161, which acts as the Proton acceptor. S-methyl-5'-thioadenosine is bound at residue P170.

Belongs to the spermidine/spermine synthase family. In terms of assembly, homodimer or homotetramer.

It localises to the cytoplasm. It carries out the reaction S-adenosyl 3-(methylsulfanyl)propylamine + propane-1,3-diamine = norspermidine + S-methyl-5'-thioadenosine + H(+). Functionally, involved in the biosynthesis of polyamines which are thought to support the growth of thermophilic microorganisms under high-temperature conditions. It seems that long-chain and branched-chain of polyamines effectively stabilize DNA and RNA, respectively. Catalyzes the irreversible transfer of a propylamine group from the amino donor S-adenosylmethioninamine (decarboxy-AdoMet) to 1,3-diaminopropane to yield sym-norspermidine (bis(3-aminopropyl)amine). It can also synthesize thermospermine from spermidine with a very low activity. In Hyperthermus butylicus (strain DSM 5456 / JCM 9403 / PLM1-5), this protein is Polyamine aminopropyltransferase 2.